Reading from the N-terminus, the 222-residue chain is Cytidylate kinase (222 aa).

9 to 17 contributes to the ATP binding site; that stretch reads GPSGAGKST.

This sequence belongs to the cytidylate kinase family. Type 1 subfamily.

The protein resides in the cytoplasm. The enzyme catalyses CMP + ATP = CDP + ADP. It carries out the reaction dCMP + ATP = dCDP + ADP. The sequence is that of Cytidylate kinase from Thermodesulfovibrio yellowstonii (strain ATCC 51303 / DSM 11347 / YP87).